The primary structure comprises 282 residues: Proteasome subunit beta (282 aa).

A propeptide spans 1 to 54 (removed in mature form; by autocatalysis); it reads MGSHRDLPAGMVNHIFTNSGISSFTEFVGSYAPDLLPGRNETLAAPVGDRIPHA. Catalysis depends on threonine 55, which acts as the Nucleophile.

This sequence belongs to the peptidase T1B family. The 20S proteasome core is composed of 14 alpha and 14 beta subunits that assemble into four stacked heptameric rings, resulting in a barrel-shaped structure. The two inner rings, each composed of seven catalytic beta subunits, are sandwiched by two outer rings, each composed of seven alpha subunits. The catalytic chamber with the active sites is on the inside of the barrel. Has a gated structure, the ends of the cylinder being occluded by the N-termini of the alpha-subunits. Is capped by the proteasome-associated ATPase, ARC.

The protein resides in the cytoplasm. It catalyses the reaction Cleavage of peptide bonds with very broad specificity.. It functions in the pathway protein degradation; proteasomal Pup-dependent pathway. With respect to regulation, the formation of the proteasomal ATPase ARC-20S proteasome complex, likely via the docking of the C-termini of ARC into the intersubunit pockets in the alpha-rings, may trigger opening of the gate for substrate entry. Interconversion between the open-gate and close-gate conformations leads to a dynamic regulation of the 20S proteasome proteolysis activity. Its function is as follows. Component of the proteasome core, a large protease complex with broad specificity involved in protein degradation. This chain is Proteasome subunit beta, found in Streptosporangium roseum (strain ATCC 12428 / DSM 43021 / JCM 3005 / KCTC 9067 / NCIMB 10171 / NRRL 2505 / NI 9100).